The following is a 147-amino-acid chain: Putative 2'-deoxynucleoside 5'-phosphate N-hydrolase 1 (147 aa).

Residues 10–16 (YFCGSIR), Tyr25, His42, Glu90, and 114–116 (SAM) each bind substrate.

The protein belongs to the 2'-deoxynucleoside 5'-phosphate N-hydrolase 1 family. In terms of assembly, monomer and homodimer.

The protein localises to the cytoplasm. It localises to the nucleus. It catalyses the reaction a pyrimidine 2'-deoxyribonucleoside 5'-phosphate + H2O = a pyrimidine nucleobase + 2-deoxy-D-ribose 5-phosphate. The catalysed reaction is a purine 2'-deoxyribonucleoside 5'-phosphate + H2O = a purine nucleobase + 2-deoxy-D-ribose 5-phosphate. Functionally, catalyzes the cleavage of the N-glycosidic bond of deoxyribonucleoside 5'-monophosphates to yield deoxyribose 5-phosphate and a purine or pyrimidine base. This is Putative 2'-deoxynucleoside 5'-phosphate N-hydrolase 1 from Nematostella vectensis (Starlet sea anemone).